A 404-amino-acid polypeptide reads, in one-letter code: Protrudin (404 aa).

Residues 1-25 are disordered; it reads MQSSDRDLSGPEASPSVMPEVLSEC. Residues 1 to 63 lie on the Cytoplasmic side of the membrane; that stretch reads MQSSDRDLSG…LKDAGDGVRY (63 aa). Positions 1-92 are sufficient for homooligomerization; the sequence is MQSSDRDLSG…LFLTLNEGAW (92 aa). The sufficient for localization to endoplasmic reticulum tubular network and for interactions with REEP1, REEP5, ATL1, ATL2, ATL3 and SPAST stretch occupies residues 1–205; the sequence is MQSSDRDLSG…LYLLPLCWVL (205 aa). Positions 51–64 are necessary for interaction with RAB11A and function in neurite outgrowth; sequence LEPLKDAGDGVRYL. A helical transmembrane segment spans residues 64–85; sequence LLRWQMPLCSLLTCLGLNILFL. Residues 86–90 are Lumenal-facing; it reads TLNEG. Residues 91 to 109 form a helical membrane-spanning segment; sequence AWYSVGALIISVPALLGYL. Residues 110 to 187 lie on the Cytoplasmic side of the membrane; the sequence is QEVCRAQLPE…NPVVSSQFYG (78 aa). An intramembrane region (helical) is located at residues 188–208; the sequence is ALLGMVCMLYLLPLCWVLALL. The Cytoplasmic portion of the chain corresponds to 209–404; sequence NSTLFLGNGE…CASCNQTLSK (196 aa). The segment at 259–299 is disordered; the sequence is DSTPAPTPTEDLTPGSVEEAEEAEPDEEFKDAIEEDDEGTP. Residues 271 to 354 are necessary for interaction with KIF5A; it reads TPGSVEEAEE…GCAATFSVLK (84 aa). A compositionally biased stretch (acidic residues) spans 276 to 299; it reads EEAEEAEPDEEFKDAIEEDDEGTP. The necessary for interaction with VAPA stretch occupies residues 286-292; sequence EFKDAIE. Residues 337-403 form an FYVE-type zinc finger; that stretch reads TNNFGNCAGC…VCASCNQTLS (67 aa). Positions 343, 346, 359, 362, 367, 370, 395, and 398 each coordinate Zn(2+).

Can form homooligomers (monomers, dimers and tetramers). Interacts with FKBP8; may negatively regulate ZFYVE27 phosphorylation. Interacts with VAPA (via MSP domain); may regulate ZFYVE27 retention in the endoplasmic reticulum and its function in cell projections formation. Interacts with VAPB (via MSP domain). Interacts with RAB11A (GDP-bound form); regulates RAB11A. Interacts with RAB11B (GDP-bound form), REEP1, REEP5, ATL1, ATL2, ATL3, SPAST, SURF4, KIF5A, KIF5B, KIF5C and RTN3. Post-translationally, phosphorylated. Phosphorylation is induced by NGF through the MAPK/ERK pathway and modulates interaction with RAB11A.

It localises to the recycling endosome membrane. The protein localises to the endoplasmic reticulum membrane. The protein resides in the cell projection. Its subcellular location is the growth cone membrane. Functionally, key regulator of RAB11-dependent vesicular trafficking during neurite extension through polarized membrane transport. Promotes axonal elongation and contributes to the establishment of neuronal cell polarity. Involved in nerve growth factor-induced neurite formation in VAPA-dependent manner. Contributes to both the formation and stabilization of the tubular ER network. Involved in ER morphogenesis by regulating the sheet-to-tubule balance and possibly the density of tubule interconnections. Acts as an adapter protein that facilitates the interaction of KIF5A with VAPA, VAPB, SURF4, RAB11A, RAB11B and RTN3 and the ZFYVE27-KIF5A complex contributes to the transport of these proteins in neurons. Can induce formation of neurite-like membrane protrusions in non-neuronal cells in a KIF5A/B-dependent manner. This is Protrudin (Zfyve27) from Rattus norvegicus (Rat).